The following is a 775-amino-acid chain: Coiled-coil domain-containing protein R3HCC1L (775 aa).

Composition is skewed to basic and acidic residues over residues 1 to 16 (MQQE…KRPD) and 65 to 112 (ESQR…KGAE). Disordered regions lie at residues 1 to 127 (MQQE…HRAP) and 235 to 262 (LSSD…DISV). The segment at 7–27 (RCRVRTKRPDMALYVPKARRG) is EJC-binding motif; may mediate interaction with the EJC. Over residues 235–247 (LSSDSETAPSSLE) the composition is skewed to polar residues. At serine 671 the chain carries Phosphoserine. Threonine 695 bears the Phosphothreonine mark. A coiled-coil region spans residues 734–766 (RSKQSKTEREAELRKLQEARERKRLEAKQREDI). Positions 755-775 (RKRLEAKQREDIWEGRDQSVV) are disordered.

As to quaternary structure, may interact with the exon junction complex (EJC) composed at least of CASC3, EIF4A3, MAGOH and RBM8A.

This chain is Coiled-coil domain-containing protein R3HCC1L (R3hcc1l), found in Mus musculus (Mouse).